Reading from the N-terminus, the 136-residue chain is Large ribosomal subunit protein uL16 (136 aa).

The protein belongs to the universal ribosomal protein uL16 family. As to quaternary structure, part of the 50S ribosomal subunit.

Binds 23S rRNA and is also seen to make contacts with the A and possibly P site tRNAs. The protein is Large ribosomal subunit protein uL16 of Histophilus somni (strain 129Pt) (Haemophilus somnus).